Here is a 510-residue protein sequence, read N- to C-terminus: ATP synthase subunit alpha (510 aa).

Residue 169–176 (GDRQTGKS) coordinates ATP.

It belongs to the ATPase alpha/beta chains family. As to quaternary structure, F-type ATPases have 2 components, CF(1) - the catalytic core - and CF(0) - the membrane proton channel. CF(1) has five subunits: alpha(3), beta(3), gamma(1), delta(1), epsilon(1). CF(0) has three main subunits: a(1), b(2) and c(9-12). The alpha and beta chains form an alternating ring which encloses part of the gamma chain. CF(1) is attached to CF(0) by a central stalk formed by the gamma and epsilon chains, while a peripheral stalk is formed by the delta and b chains.

The protein resides in the cell membrane. The catalysed reaction is ATP + H2O + 4 H(+)(in) = ADP + phosphate + 5 H(+)(out). In terms of biological role, produces ATP from ADP in the presence of a proton gradient across the membrane. The alpha chain is a regulatory subunit. The chain is ATP synthase subunit alpha from Wigglesworthia glossinidia brevipalpis.